Here is a 400-residue protein sequence, read N- to C-terminus: Tryptophan synthase beta chain (400 aa).

Lysine 92 is modified (N6-(pyridoxal phosphate)lysine).

The protein belongs to the TrpB family. Tetramer of two alpha and two beta chains. Pyridoxal 5'-phosphate serves as cofactor.

It carries out the reaction (1S,2R)-1-C-(indol-3-yl)glycerol 3-phosphate + L-serine = D-glyceraldehyde 3-phosphate + L-tryptophan + H2O. The protein operates within amino-acid biosynthesis; L-tryptophan biosynthesis; L-tryptophan from chorismate: step 5/5. In terms of biological role, the beta subunit is responsible for the synthesis of L-tryptophan from indole and L-serine. The sequence is that of Tryptophan synthase beta chain from Neisseria gonorrhoeae.